Here is a 377-residue protein sequence, read N- to C-terminus: MGIAGTFIFMIVIGAAIGAVTNHLAIQMLFRPYKAYYLFGKRVPFTPGLIPRRRDELAKQMGLMVVNHLLTPEGIKKRLVSDAAKTQALRVGEQLIQKLSLSEVTVKEALEKAGMKRPEKAADAWISSWTDDKLHELFRQYGDQSLKELVPIEVQEKLEEKIPMISGYILSRSVRYFESDEGKIRLGNMIDDFLKERGMLGSMVQLFLGNSSLADRVLPELLKFLRNEETNKLLSDLLKNEWGKLREYTFNEADEKWNAKALIFSLKRRVLQAFSTAPFFNNTIGTLTVRYESELTQQMLPALLDKLLEGISSNLESVLKRLRLEEIVKEQVDQFPVERLEEMVLSISKKEFKMITYLGGLLGGIIGAIQALFVILF.

Helical transmembrane passes span 1–21 (MGIA…GAVT) and 357–377 (YLGG…VILF).

The protein belongs to the UPF0754 family.

It is found in the cell membrane. The sequence is that of UPF0754 membrane protein YheB (yheB) from Bacillus subtilis (strain 168).